Consider the following 678-residue polypeptide: Methionine--tRNA ligase (678 aa).

The 'HIGH' region motif lies at 14–24; it reads PYANGSIHLGH. Zn(2+) contacts are provided by Cys-145, Cys-148, Cys-158, and Cys-161. The 'KMSKS' region motif lies at 331 to 335; it reads KMSKS. Lys-334 provides a ligand contact to ATP. One can recognise a tRNA-binding domain in the interval 576 to 678; the sequence is AFAAVDLRIA…SGAKPGQRVK (103 aa).

This sequence belongs to the class-I aminoacyl-tRNA synthetase family. MetG type 1 subfamily. In terms of assembly, homodimer. The cofactor is Zn(2+).

The protein resides in the cytoplasm. The catalysed reaction is tRNA(Met) + L-methionine + ATP = L-methionyl-tRNA(Met) + AMP + diphosphate. Is required not only for elongation of protein synthesis but also for the initiation of all mRNA translation through initiator tRNA(fMet) aminoacylation. This Pseudomonas aeruginosa (strain UCBPP-PA14) protein is Methionine--tRNA ligase.